The following is a 360-amino-acid chain: Photosystem II protein D1 (360 aa).

The next 3 helical transmembrane spans lie at 29–46, 118–133, and 142–156; these read YIGW…TATS, HFLL…EWEL, and WISV…AAAA. A chlorophyll a-binding site is contributed by histidine 118. Tyrosine 126 contributes to the pheophytin a binding site. 2 residues coordinate [CaMn4O5] cluster: aspartate 170 and glutamate 189. Residues 197–218 traverse the membrane as a helical segment; it reads FHQLGVAGVFGGSLFSAMHGSL. Histidine 198 contributes to the chlorophyll a binding site. Residues histidine 215 and 264 to 265 each bind a quinone; that span reads SF. Histidine 215 serves as a coordination point for Fe cation. Residue histidine 272 coordinates Fe cation. A helical transmembrane segment spans residues 274–288; the sequence is FLGLWPVVGIWFTAM. 4 residues coordinate [CaMn4O5] cluster: histidine 332, glutamate 333, aspartate 342, and alanine 344. Positions 345-360 are excised as a propeptide; it reads SSNSLPVSLVAPSVNG.

This sequence belongs to the reaction center PufL/M/PsbA/D family. As to quaternary structure, PSII is composed of 1 copy each of membrane proteins PsbA, PsbB, PsbC, PsbD, PsbE, PsbF, PsbH, PsbI, PsbJ, PsbK, PsbL, PsbM, PsbT, PsbX, PsbY, PsbZ, Psb30/Ycf12, at least 3 peripheral proteins of the oxygen-evolving complex and a large number of cofactors. It forms dimeric complexes. The D1/D2 heterodimer binds P680, chlorophylls that are the primary electron donor of PSII, and subsequent electron acceptors. It shares a non-heme iron and each subunit binds pheophytin, quinone, additional chlorophylls, carotenoids and lipids. D1 provides most of the ligands for the Mn4-Ca-O5 cluster of the oxygen-evolving complex (OEC). There is also a Cl(-1) ion associated with D1 and D2, which is required for oxygen evolution. The PSII complex binds additional chlorophylls, carotenoids and specific lipids. is required as a cofactor. In terms of processing, tyr-161 forms a radical intermediate that is referred to as redox-active TyrZ, YZ or Y-Z. C-terminally processed by CTPA; processing is essential to allow assembly of the oxygen-evolving complex and thus photosynthetic growth.

The protein resides in the plastid. The protein localises to the chloroplast thylakoid membrane. The catalysed reaction is 2 a plastoquinone + 4 hnu + 2 H2O = 2 a plastoquinol + O2. Functionally, photosystem II (PSII) is a light-driven water:plastoquinone oxidoreductase that uses light energy to abstract electrons from H(2)O, generating O(2) and a proton gradient subsequently used for ATP formation. It consists of a core antenna complex that captures photons, and an electron transfer chain that converts photonic excitation into a charge separation. The D1/D2 (PsbA/PsbD) reaction center heterodimer binds P680, the primary electron donor of PSII as well as several subsequent electron acceptors. In Gracilaria tenuistipitata var. liui (Red alga), this protein is Photosystem II protein D1.